The following is a 102-amino-acid chain: UPF0213 protein XCC3072 (102 aa).

In terms of domain architecture, GIY-YIG spans 5 to 80 (KPWHLYLLLC…KQQPRARKLA (76 aa)).

The protein belongs to the UPF0213 family.

In Xanthomonas campestris pv. campestris (strain ATCC 33913 / DSM 3586 / NCPPB 528 / LMG 568 / P 25), this protein is UPF0213 protein XCC3072.